The chain runs to 6781 residues: MASNHVTLAFANDAEISAFGFCTASEAVSYYSEAAASGFMQCRFVSLDLADTVEGLLPEDYVMVVIGTTKLSAYVDTFGSRPRNICGWLLFSNCNYFLEELELTFGRRGGNIVPVDQYMCGADGKPVLQESEWEYTDFFADSEDGQLNIAGITYVKAWIVERSDVSYASQNLTSIKSITYCSTYEHTFLDGTAMKVARTPKIKKNVVLSEPLATIYREIGSPFVDNGSDARSIIRRPVFLHAFVKCKCGSYHWTVGDWTSYVSTCCGFKCKPVLVASCSAMPGSVVVTRAGAGTGVKYYNNMFLRHVADIDGLAFWRILKVQSKDDLACSGKFLEHHEEGFTDPCYFLNDSSLATKLKFDILSGKFSDEVKQAIIAGHVVVGSALVDIVDDALGQPWFIRKLGDLASAPWEQLKAVVRGLGLLSDEVVLFGKRLSCATLSIVNGVFEFLADVPEKLAAAVTVFVNFLNEFFESACDCLKVGGKTFNKVGSYVLFDNALVKLVKAKARGPRQAGICEVRYTSLVVGSTTKVVSKRVENANVNLVVVDEDVTLNTTGRTVVVDGLAFFESDGFYRHLADADVVIEHPVYKSACELKPVFECDPIPDFPLPVAASVAELCVQTDLLLKNYNTPYKTYSCVVRGDKCCITCTLQFKAPSYVEDAVNFVDLCTKNIGTAGFHEFYITAHEQQDLQGFLTTCCTMSGFECFMPTIPQCPAVLEEIDGGSIWRSFITGLNTMWDFCKRLKVSFGLDGIVVTVARKFKRLGALLAEMYNTYLSTVVENLVLAGVSFKYYATSVPKIVLGGCFHSVKSVFASVFQIPVQAGIEKFKVFLNCVHPVVPRVIETSFVELEETTFKPPALNGGIAIVDGFAFYYDGTLYYPTDGNSVVPICFKKKGGGDVKFSDEVSVKTIDPVYKVSLEFEFESETIMAVLNKAVGNRIKVTGGWDDVVEYINVAIEVLKDHVEVPKYYIYDEEGGTDPNLPVMVSQWPLNDDTISQDLLDVEVVTDAPIDSEGDEVDSSAPEKVADVANSEPGDDGLPVAPETNVESEVEEVAATLSFIKDTPSTVTKDPFAFDFVSYGGLKVLRQSHNNCWVTSTLVQLQLLGIVDDPAMELFSAGRVGPMVRKCYESQKAILGSLGDVSACLESLTKDLHTLKITCSVVCGCGTGERIYEGCAFRMTPTLEPFPYGACAQCAQVLMHTFKSIVGTGIFCRDTTALSLDSLVVKPLCAAAFIGKDSGHYVTNFYDAAMAIDGYGRHQIKYDTLNTICVKDVNWTAPLVPAVDSVVEPVVKPFYSYKNVDFYQGDFSDLVKLPCDFVVNAANEKLSHGGGIAKAIDVYTKGMLQKCSNDYIKAHGPIKVGRGVMLEALGLKVFNVVGPRKGKHAPELLVKAYKSVFANSGVALTPLISVGIFSVPLEESLSAFLACVGDRHCKCFCYGDKEREAIIKYMDGLVDAIFKEALVDTTPVQEDVQQVSQKPVLPNFEPFRIEGAHAFYECNPEGLMSLGADKLVLFTNSNLDFCSVGKCLNDVTSGALLEAINVFKKSNKTVPAGNCVTLDCANMISITMVVLPFDGDANYDKNYARAVVKVSKLKGKLVLAVDDATLYSKLSHLSVLGFVSTPDDVERFYANKSVVIKVTEDTRSVKAVKVESTATYGQQIGPCLVNDTVVTDNKPVVADVVAKVVPNANWDSHYGFDKAGEFHMLDHTGFTFPSEVVNGRRVIKTTDNNCWVNVTCLQLQFARFRFKSAGLQAMWESYCTGDVAMFVHWLYWLTGVDKGQPSDSENALNMLSKYIVPAGSVTIERVTHDGCCCSKRVVTAPVVNASVLKLGVEDGLCPHGLNYIGKVVVVKGTTIVVNVGKPVVAPSHLFLKGVSYTTFLDNGNGVVGHYTVFDHGTGMVHDGDAFVPGDLNVSPVTNVVVSEQTAVVIKDPVKKAELDATKLLDTMNYASERFFSFGDFMSRNLITVFLYILSILGLCFRAFRKRDVKVLAGVPQRTGIILRKSMRYNAKALGVFFKLKLYWFKVLGKFSLGIYALYALLFMTIRFTPIGSPVCDDVVAGYANSSFDKNEYCNSVICKVCLYGYQELSDFSHTQVVWQHLRDPLIGNVMPFFYLAFLAIFGGVYVKAITLYFIFQYLNSLGVFLGLQQSIWFLQLVPFDVFGDEIVVFFIVTRVLMFIKHVCLGCDKASCVACSKSARLKRVPVQTIFQGTSKSFYVHANGGSKFCKKHNFFCLNCDSYGPGCTFINDVIATEVGNVVKLNVQPTGPATILIDKVEFSNGFYYLYSGDTFWKYNFDITDSKYTCKEALKNCSIITDFIVFNNNGSNVNQVKNACVYFSQMLCKPVKLVDSALLASLSVDFGASLHSAFVSVLSNSFGKDLSSCNDMQDCKSTLGFDDVPLDTFNAAVAEAHRYDVLLTDMSFNNFTTSYAKPEEKFPVHDIATCMRVGAKIVNHNVLVKDSIPVVWLVRDFIALSEETRKYIIRTTKVKGITFMLTFNDCRMHTTIPTVCIANKKGAGLPSFSKVKKFFWFLCLFIVAAFFALSFLDFSTQVSSDSDYDFKYIESGQLKTFDNPLSCVHNVFINFDQWHDAKFGFTPVNNPSCPIVVGVSDEARTVPGIPAGVYLAGKTLVFAINTIFGTSGLCFDASGVADKGACIFNSACTTLSGLGGTAVYCYKNGLVEGAKLYSELAPHSYYKMVDGNAVSLPEIISRGFGIRTIRTKAMTYCRVGQCVQSAEGVCFGADRFFVYNAESGSDFVCGTGLFTLLMNVISVFSKTVPVTVLSGQILFNCIIAFVAVAVCFLFTKFKRMFGDMSVGVFTVGACTLLNNVSYIVTQNTLGMLGYATLYFLCTKGVRYMWIWHLGFLISYILIAPWWVLMVYAFSAIFEFMPNLFKLKVSTQLFEGDKFVGSFENAAAGTFVLDMHAYERLANSISTEKLRQYASTYNKYKYYSGSASEADYRLACFAHLAKAMMDYASNHNDTLYTPPTVSYNSTLQAGLRKMAQPSGVVEKCIVRVCYGNMALNGLWLGDIVMCPRHVIASSTTSTIDYDYALSVLRLHNFSISSGNVFLGVVSATMRGALLQIKVNQNNVHTPKYTYRTVRPGESFNILACYDGAAAGVYGVNMRSNYTIRGSFINGACGSPGYNINNGTVEFCYLHQLELGSGCHVGSDLDGVMYGGYEDQPTLQVEGASSLFTENVLAFLYAALINGSTWWLSSSRIAVDRFNEWAVHNGMTTVGNTDCFSILAAKTGVDVQRLLASIQSLHKNFGGKQILGHTSLTDEFTTGEVVRQMYGVNLQGGYVSRACRNVLLVGSFLTFFWSELVSYTKFFWVNPGYVTPMFACLSLLSSLLMFTLKHKTLFFQVFLIPALIVTSCINLAFDVEVYNYLAEHFDYHVSLMGFNAQGLVNIFVCFVVTILHGTYTWRFFNTPASSVTYVVALLTAAYNYFYASDILSCAMTLFASVTGNWFVGAVCYKVAVYMALRFPTFVAIFGDIKSVMFCYLVLGYFTCCFYGILYWFNRFFKVSVGVYDYTVSAAEFKYMVANGLRAPTGTLDSLLLSAKLIGIGGERNIKISSVQSKLTDIKCSNVVLLGCLSSMNVSANSTEWAYCVDLHNKINLCNDPEKAQEMLLALLAFFLSKNSAFGLDDLLESYFNDNSMLQSVASTYVGLPSYVIYENARQQYEDAVNNGSPPQLVKQLRHAMNVAKSEFDREASTQRKLDRMAEQAAAQMYKEARAVNRKSKVVSAMHSLLFGMLRRLDMSSVDTILNLAKDGVVPLSVIPAVSATKLNIVTSDIDSYNRIQREGCVHYAGTIWNIIDIKDNDGKVVHVKEVTAQNAESLSWPLVLGCERIVKLQNNEIIPGKLKQRSIKAEGDGIVGEGKALYNNEGGRTFMYAFISDKPDLRVVKWEFDGGCNTIELEPPRKFLVDSPNGAQIKYLYFVRNLNTLRRGAVLGYIGATVRLQAGKQTEQAINSSLLTLCAFAVDPAKTYIDAVKSGHKPVGNCVKMLANGSGNGQAVTNGVEASTNQDSYGGASVCLYCRAHVEHPSMDGFCRLKGKYVQVPLGTVDPIRFVLENDVCKVCGCWLSNGCTCDRSIMQSTDMAYLNRVRGSSAARLEPCNGTDTQHVYRAFDIYNKDVACLGKFLKVNCVRLKNLDKHDAFYVVKRCTKSAMEHEQSIYSRLEKCGAIAEHDFFTWKDGRAIYGNVCRKDLTEYTMMDLCYALRNFDENNCDVLKSILIKVGACEESYFNNKVWFDPVENEDIHRVYALLGTIVARAMLKCVKFCDAMVEQGIVGVVTLDNQDLNGDFYDFGDFTCSIKGMGVPICTSYYSYMMPVMGMTNCLASECFVKSDIFGEDFKSYDLLEYDFTEHKTALFNKYFKYWGLQYHPNCVDCSDEQCIVHCANFNTLFSTTIPITAFGPLCRKCWIDGVPLVTTAGYHFKQLGIVWNNDLNLHSSRLSINELLQFCSDPALLIASSPALVDQRTVCFSVAALGTGMTNQTVKPGHFNKEFYDFLLEQGFFSEGSELTLKHFFFAQKVDAAVKDFDYYRYNRPTVLDICQARVVYQIVQRYFDIYEGGCITAKEVVVTNLNKSAGYPLNKFGKAGLYYESLSYEEQDELYAYTKRNILPTMTQLNLKYAISGKERARTVGGVSLLSTMTTRQYHQKHLKSIVNTRGASVVIGTTKFYGGWDNMLKNLIDGVENPCLMGWDYPKCDRALPNMIRMISAMILGSKHTTCCSSTDRFFRLCNELAQVLTEVVYSNGGFYLKPGGTTSGDATTAYANSVFNIFQAVSANVNKLLSVDSNVCHNLEVKQLQRKLYECCYRSTIVDDQFVVEYYGYLRKHFSMMILSDDGVVCYNNDYASLGYVADLNAFKAVLYYQNNVFMSASKCWIEPDINKGPHEFCSQHTMQIVDKEGTYYLPYPDPSRILSAGVFVDDVVKTDAVVLLERYVSLAIDAYPLSKHENPEYKKVFYVLLDWVKHLYKTLNAGVLESFSVTLLEDSTAKFWDESFYANMYEKSAVLQSAGLCVVCGSQTVLRCGDCLRRPMLCTKCAYDHVIGTTHKFILAITPYVCCASDCGVNDVTKLYLGGLSYWCHEHKPRLAFPLCSAGNVFGLYKNSATGSPDVEDFNRIATSDWTDVSDYRLANDVKDSLRLFAAETIKAKEESVKSSYACATLHEVVGPKELLLKWEVGRPKPPLNRNSVFTCYHITKNTKFQIGEFVFEKAEYDNDAVTYKTTATTKLVPGMVFVLTSHNVQPLRAPTIANQERYSTIHKLHPAFNIPEAYSSLVPYYQLIGKQKITTIQGPPGSGKSHCVIGLGLYYPGARIVFTACSHAAVDSLCVKASTAYSNDKCSRIIPQRARVECYDGFKSNNTSAQYLFSTVNALPECNADIVVVDEVSMCTNYDLSVINQRISYRHVVYVGDPQQLPAPRVMISRGTLEPKDYNVVTQRMCALKPDVFLHKCYRCPAEIVRTVSEMVYENQFIPVHPDSKQCFKIFCKGNVQVDNGSSINRRQLDVVRMFLAKNPRWSKAVFISPYNSQNYVASRLLGLQIQTVDSSQGSEYDYVIYAQTSDTAHASNVNRFNVAITRAKKGILCIMCDRSLFDLLKFFELKLSDLQANEGCGLFKDCSRGDDLLPPSHANTFMSLADNFKTDQYLAVQIGVNGPIKYEHVISFMGFRFDINIPNHHTLFCTRDFAMRNVRGWLGFDVEGAHVVGSNVGTNVPLQLGFSNGVDFVVRPEGCVVTESGDYIKPVRARAPPGEQFAHLLPLLKRGQPWDVVRKRIVQMCSDYLANLSDILIFVLWAGGLELTTMRYFVKIGPSKSCDCGKVATCYNSALHTYCCFKHALGCDYLYNPYCIDIQQWGYKGSLSLNHHEHCNVHRNEHVASGDAIMTRCLAIHDCFVKNVDWSITYPFIGNEAVINKSGRIVQSHTMRSVLKLYNPKAIYDIGNPKGIRCAVTDAKWFCFDKNPTNSNVKTLEYDYITHGQFDGLCLFWNCNVDMYPEFSVVCRFDTRCRSPLNLEGCNGGSLYVNNHAFHTPAFDKRAFAKLKPMPFFFYDDTECDKLQDSINYVPLRASNCITKCNVGGAVCSKHCAMYHSYVNAYNTFTSAGFTIWVPTSFDTYNLWQTFSNNLQGLENIAFNVLKKGSFVGDEGELPVAVVNDKVLVRDGTVDTLVFTNKTSLPTNVAFELYAKRKVGLTPPITILRNLGVVCTSKCVIWDYEAERPLTTFTKDVCKYTDFEGDVCTLFDNSIVGSLERFSMTQNAVLMSLTAVKKLTGIKLTYGYLNGVPVNTHEDKPFTWYIYTRKNGKFEDYPDGYFTQGRTTADFSPRSDMEKDFLSMDMGLFINKYGLEDYGFEHVVYGDVSKTTLGGLHLLISQVRLACMGVLKIDEFVSSNDSTLKSCTVTYADNPSSKMVCTYMDLLLDDFVSILKSLDLSVVSKVHEVMVDCKMWRWMLWCKDHKLQTFYPQLQASEWKCGYSMPSIYKIQRMCLEPCNLYNYGAGVKLPDGIMFNVVKYTQLCQYLNSTTMCVPHHMRVLHLGAGSDKGVAPGTAVLRRWLPLDAIIVDNDSVDYVSDADYSVTGDCSTLYLSDKFDLVISDMYDGKIKSCDGENVSKEGFFPYINGVITEKLALGGTVAIKVTEFSWNKKLYELIQKFEYWTMFCTSVNTSSSEAFLIGVHYLGDFASGAVIDGNTMHANYIFWRNSTIMTMSYNSVLDLSKFNCKHKATVVVNLKDSSISDVVLGLLKNGKLLVRNNDAICGFSNHLVNVNK.

Residues 2–109 (ASNHVTLAFA…ELELTFGRRG (108 aa)) form the CoV Nsp1 globular domain. The ssDNA site is built by E59, N95, E99, and E102. Positions 112–364 (IVPVDQYMCG…TKLKFDILSG (253 aa)) constitute a CoV Nsp2 N-terminal domain. The 394-residue stretch at 383–776 (SALVDIVDDA…AEMYNTYLST (394 aa)) folds into the CoV Nsp2 middle domain. The CoV Nsp2 C-terminal domain occupies 778–895 (VENLVLAGVS…VPICFKKKGG (118 aa)). The Ubiquitin-like 1 domain occupies 896-991 (GDVKFSDEVS…VMVSQWPLND (96 aa)). The disordered stretch occupies residues 1009–1040 (IDSEGDEVDSSAPEKVADVANSEPGDDGLPVA). Positions 1057-1296 (SFIKDTPSTV…EPVVKPFYSY (240 aa)) constitute a Peptidase C16 1 domain. The active-site For PL1-PRO activity is C1091. The C4-type 1; degenerate zinc finger occupies 1162–1193 (CGCGTGERIYEGCAFRMTPTLEPFPYGACAQC). Active-site for PL1-PRO activity residues include H1239 and D1252. Residues 1297-1465 (KNVDFYQGDF…IFKEALVDTT (169 aa)) form the Macro domain. One can recognise a Ubiquitin-like 2 domain in the interval 1630–1685 (NKSVVIKVTEDTRSVKAVKVESTATYGQQIGPCLVNDTVVTDNKPVVADVVAKVVP). Residues 1691–1951 (SHYGFDKAGE…LLDTMNYASE (261 aa)) enclose the Peptidase C16 2 domain. Residue C1729 is the For PL2-PRO activity of the active site. Residues 1808–1838 (DGCCCSKRVVTAPVVNASVLKLGVEDGLCPH) form a C4-type 2; degenerate zinc finger. Catalysis depends on for PL2-PRO activity residues H1888 and D1901. The next 2 membrane-spanning stretches (helical) occupy residues 1959-1979 (FMSRNLITVFLYILSILGLCF) and 2022-2042 (WFKVLGKFSLGIYALYALLFM). Residues 1959–2170 (FMSRNLITVF…FGDEIVVFFI (212 aa)) are HD1. The 65-residue stretch at 2038–2102 (ALLFMTIRFT…TQVVWQHLRD (65 aa)) folds into the 3Ecto domain. 2 cysteine pairs are disulfide-bonded: C2054–C2080 and C2072–C2077. 3 helical membrane-spanning segments follow: residues 2105–2125 (IGNVMPFFYLAFLAIFGGVYV), 2127–2147 (AITLYFIFQYLNSLGVFLGLQ), and 2150–2170 (IWFLQLVPFDVFGDEIVVFFI). The Y1 stretch occupies residues 2176 to 2266 (MFIKHVCLGC…VVKLNVQPTG (91 aa)). Residues 2176 to 2516 (MFIKHVCLGC…PTVCIANKKG (341 aa)) form the CoV Nsp3 Y domain. The Zn(2+) site is built by H2180, C2185, C2190, C2193, C2226, H2229, C2233, and C2236. Positions 2180–2193 (HVCLGCDKASCVAC) are ZF1. The tract at residues 2226–2236 (CKKHNFFCLNC) is ZF2. The interval 2267–2356 (PATILIDKVE…LVDSALLASL (90 aa)) is Y2. The interval 2267 to 2516 (PATILIDKVE…PTVCIANKKG (250 aa)) is coV-Y. Positions 2357 to 2414 (SVDFGASLHSAFVSVLSNSFGKDLSSCNDMQDCKSTLGFDDVPLDTFNAAVAEAHRYD) are Y3. Positions 2415-2516 (VLLTDMSFNN…PTVCIANKKG (102 aa)) are Y4. The next 7 helical transmembrane spans lie at 2528–2548 (FFWFLCLFIVAAFFALSFLDF), 2619–2639 (IPAGVYLAGKTLVFAINTIFG), 2654–2674 (GACIFNSACTTLSGLGGTAVY), 2754–2774 (GSDFVCGTGLFTLLMNVISVF), 2787–2807 (ILFNCIIAFVAVAVCFLFTKF), 2814–2834 (MSVGVFTVGACTLLNNVSYIV), and 2863–2883 (LGFLISYILIAPWWVLMVYAF). Positions 2528–2883 (FFWFLCLFIV…PWWVLMVYAF (356 aa)) are HD2. The Nsp4C domain occupies 2902 to 2997 (LFEGDKFVGS…PTVSYNSTLQ (96 aa)). One can recognise a Peptidase C30 domain in the interval 2998 to 3299 (AGLRKMAQPS…VRQMYGVNLQ (302 aa)). Catalysis depends on for 3CL-PRO activity residues H3038 and C3141. The next 7 helical transmembrane spans lie at 3336 to 3356 (GYVTPMFACLSLLSSLLMFTL), 3361 to 3381 (LFFQVFLIPALIVTSCINLAF), 3399 to 3419 (LMGFNAQGLVNIFVCFVVTIL), 3431 to 3451 (PASSVTYVVALLTAAYNYFYA), 3454 to 3474 (ILSCAMTLFASVTGNWFVGAV), 3476 to 3496 (YKVAVYMALRFPTFVAIFGDI), and 3500 to 3520 (MFCYLVLGYFTCCFYGILYWF). The tract at residues 3336-3520 (GYVTPMFACL…CCFYGILYWF (185 aa)) is HD3. The 83-residue stretch at 3580–3662 (SKLTDIKCSN…SYFNDNSMLQ (83 aa)) folds into the RdRp Nsp7 cofactor domain. The RdRp Nsp8 cofactor domain occupies 3663–3857 (SVASTYVGLP…LGCERIVKLQ (195 aa)). The 108-residue stretch at 3858–3965 (NNEIIPGKLK…GYIGATVRLQ (108 aa)) folds into the Nsp9 ssRNA-binding domain. In terms of domain architecture, ExoN/MTase coactivator spans 3966–4103 (AGKQTEQAIN…CDRSIMQSTD (138 aa)). Zn(2+) is bound by residues C4039, C4042, H4048, C4055, C4081, C4084, C4092, and C4094. Zinc fingers lie at residues 4039–4055 (CLYCRAHVEHPSMDGFC) and 4081–4094 (CKVCGCWLSNGCTC). A NiRAN domain is found at 4106 to 4355 (YLNRVRGSSA…ASECFVKSDI (250 aa)). The 99-residue stretch at 4361–4459 (KSYDLLEYDF…WNNDLNLHSS (99 aa)) folds into the Nsp12 Interface domain. The Zn(2+) site is built by H4390, C4396, C4401, C4405, and C4582. The 568-residue stretch at 4460 to 5027 (RLSINELLQF…NMYEKSAVLQ (568 aa)) folds into the Nsp12 RNA-dependent RNA polymerase domain. Residues 4462 to 4676 (SINELLQFCS…HQKHLKSIVN (215 aa)) form a rdRp Fingers N-ter region. The segment at 4677–4715 (TRGASVVIGTTKFYGGWDNMLKNLIDGVENPCLMGWDYP) is rdRp Palm N-ter. The RdRp catalytic domain occupies 4707 to 4869 (PCLMGWDYPK…CYNNDYASLG (163 aa)). The tract at residues 4716 to 4774 (KCDRALPNMIRMISAMILGSKHTTCCSSTDRFFRLCNELAQVLTEVVYSNGGFYLKPGG) is rdRp Fingers C-ter. Zn(2+) contacts are provided by H4737, C4740, and C4741. The rdRp Palm C-ter stretch occupies residues 4775–4910 (TTSGDATTAY…NKGPHEFCSQ (136 aa)). Active-site for RNA-directed RNA polymerase activity residues include S4854, D4855, and D4856. The interval 4911-5027 (HTMQIVDKEG…NMYEKSAVLQ (117 aa)) is rdRp Thumb. The 113-residue stretch at 5028–5140 (SAGLCVVCGS…EDFNRIATSD (113 aa)) folds into the CV ZBD domain. C5032, C5035, C5043, C5046, C5053, C5056, H5060, H5066, C5077, C5082, C5099, and H5102 together coordinate Zn(2+). Positions 5275-5466 (STIHKLHPAF…MCALKPDVFL (192 aa)) constitute a (+)RNA virus helicase ATP-binding domain. Residue 5310–5317 (GPPGSGKS) coordinates ATP. In terms of domain architecture, (+)RNA virus helicase C-terminal spans 5467-5636 (HKCYRCPAEI…EGCGLFKDCS (170 aa)). Residues 5696–5910 (LFCTRDFAMR…RCLAIHDCFV (215 aa)) enclose the ExoN domain. Residues D5714, E5716, and E5815 each act as for exoribonuclease activity in the active site. Zn(2+)-binding residues include C5831, C5833, C5849, H5852, H5880, C5884, and H5887. Catalysis depends on for exoribonuclease activity residues H5891 and D5896. A Zn(2+)-binding site is contributed by C5902. The region spanning 5919 to 6140 (YPFIGNEAVI…NLWQTFSNNL (222 aa)) is the N7-MTase domain. 5954-5960 (DIGNPKG) serves as a coordination point for S-adenosyl-L-methionine. The segment at 6031–6045 (CNGGSLYVNNHAFHT) is gpppA-binding. Positions 6069, 6086, 6097, and 6100 each coordinate Zn(2+). One can recognise a Nsp15 N-terminal oligomerization domain in the interval 6142–6202 (GLENIAFNVL…NVAFELYAKR (61 aa)). One can recognise an AV-Nsp11N/CoV-Nsp15M domain in the interval 6203 to 6320 (KVGLTPPITI…IYTRKNGKFE (118 aa)). Residues 6337–6477 (SPRSDMEKDF…KDHKLQTFYP (141 aa)) form the NendoU domain. Catalysis depends on for uridylate-specific endoribonuclease activity residues H6367, H6382, and K6423. Residues 6481–6777 (ASEWKCGYSM…AICGFSNHLV (297 aa)) enclose the Nidovirus-type SAM-dependent 2'-O-MTase domain. Catalysis depends on for 2'-O-methyltransferase residues K6525, D6609, K6649, and E6682.

The protein belongs to the coronaviruses polyprotein 1ab family. In terms of assembly, interacts with PL-PRO and nsp6. As to quaternary structure, monomer. Homodimer; disulfide-linked. Interacts with nsp8 and nsp12 to form the replication-transcription complex (RTC): nsp12, nsp7, two subunits of nsp8, and up to two subunits of nsp13. Eight copies of nsp7 and eight copies of nsp8 assemble to form a heterohexadecamer dsRNA-encircling ring structure. In terms of assembly, interacts with nsp7, nsp13 and nsp12 to form the replication-transcription complex (RTC): nsp12, nsp7, two subunits of nsp8, and up to two subunits of nsp13. Eight copies of nsp7 and eight copies of nsp8 assemble to form a heterohexadecamer dsRNA-encircling ring structure. As to quaternary structure, homodimer. Forms a dodecamer and interacts with nsp14 and nsp16; these interactions enhance nsp14 and nsp16 enzymatic activities. The cofactor is Mn(2+). In terms of processing, specific enzymatic cleavages in vivo by its own proteases yield mature proteins. 3CL-PRO and PL-PRO proteinases are autocatalytically processed.

The protein resides in the host cytoplasm. The protein localises to the host nucleus. It is found in the host membrane. It localises to the host perinuclear region. Its subcellular location is the host endoplasmic reticulum. The protein resides in the host endoplasmic reticulum-Golgi intermediate compartment. It catalyses the reaction Thiol-dependent hydrolysis of ester, thioester, amide, peptide and isopeptide bonds formed by the C-terminal Gly of ubiquitin (a 76-residue protein attached to proteins as an intracellular targeting signal).. It carries out the reaction a 5'-end diphospho-ribonucleoside in mRNA + GTP + H(+) = a 5'-end (5'-triphosphoguanosine)-ribonucleoside in mRNA + diphosphate. The catalysed reaction is RNA(n) + a ribonucleoside 5'-triphosphate = RNA(n+1) + diphosphate. The enzyme catalyses ATP + H2O = ADP + phosphate + H(+). It catalyses the reaction a 5'-end (5'-triphosphoguanosine)-ribonucleoside in mRNA + S-adenosyl-L-methionine = a 5'-end (N(7)-methyl 5'-triphosphoguanosine)-ribonucleoside in mRNA + S-adenosyl-L-homocysteine. It carries out the reaction uridylyl-uridylyl-ribonucleotide-RNA = a 3'-end uridylyl-2',3'-cyclophospho-uridine-RNA + a 5'-end dephospho-ribonucleoside-RNA. The catalysed reaction is a 5'-end (N(7)-methyl 5'-triphosphoguanosine)-ribonucleoside in mRNA + S-adenosyl-L-methionine = a 5'-end (N(7)-methyl 5'-triphosphoguanosine)-(2'-O-methyl-ribonucleoside) in mRNA + S-adenosyl-L-homocysteine + H(+). Its activity is regulated as follows. Inhibited by the substrate-analog Cbz-Val-Asn-Ser-Thr-Leu-Gln-CMK. Inhibited by (R)-16. Multifunctional protein responsible for the transcription of negative stranded RNA, leader RNA, subgenomic mRNAs and progeny virion RNA as well as proteinases responsible for the cleavage of the polyprotein into functional products. In terms of biological role, plays a role in the inhibition of host interferon and pro-inflammatory cytokines production. Suppresses host RELA/p65 activation by blocking NFKBIA phosphorylation. Targets also the RLR pathway downstream of the IRF3 activation by targeting host CREBBP to proteasomal degradation. Its function is as follows. Responsible for the cleavages located at the N-terminus of the replicase polyprotein. Participates together with nsp4 in the assembly of virally-induced cytoplasmic double-membrane vesicles necessary for viral replication. Forms a molecular pore spanning the double membrane of the coronavirus replication organelle. In addition, PLP2 possesses a deubiquitinating/deISGylating activity and processes both 'Lys-48'- and 'Lys-63'-linked polyubiquitin chains from cellular substrates. PLP2 also antagonizes innate immune induction of type I interferon by blocking the nuclear translocation of host IRF-3. Participates in the inhibition of the integrated stress response (ISR) in the infected host cell. Functionally, participates in the assembly of virally-induced cytoplasmic double-membrane vesicles necessary for viral replication. Responsible for the majority of cleavages as it cleaves the C-terminus of replicase polyprotein at 11 sites. Recognizes substrates containing the core sequence [ILMVF]-Q-|-[SGACN]. Also contains an ADP-ribose-1''-phosphate (ADRP)-binding function. Participates in the inhibition of the integrated stress response (ISR) in the infected host cell. In terms of biological role, plays a role in the initial induction of autophagosomes from host endoplasmic reticulum. Later, limits the expansion of these phagosomes that are no longer able to deliver viral components to lysosomes. Its function is as follows. Plays a role in viral RNA synthesis. Forms a hexadecamer with nsp8 (8 subunits of each) that may participate in viral replication by acting as a primase. Alternatively, may synthesize substantially longer products than oligonucleotide primers. Functionally, plays a role in viral RNA synthesis. Forms a hexadecamer with nsp7 (8 subunits of each) that may participate in viral replication by acting as a primase. Alternatively, may synthesize substantially longer products than oligonucleotide primers. Forms a primer, NSP9-pU, which is utilized by the polymerase for the initiation of RNA chains. Interacts with ribosome signal recognition particle RNA (SRP). Together with NSP8, suppress protein integration into the cell membrane, thereby disrupting host immune defenses. In terms of biological role, plays a pivotal role in viral transcription by stimulating both nsp14 3'-5' exoribonuclease and nsp16 2'-O-methyltransferase activities. Therefore plays an essential role in viral mRNAs cap methylation. Its function is as follows. RNA-directed RNA polymerase that catalyzes the transcription of viral genomic and subgenomic RNAs. Acts in complex with nsp7 and nsp8 to transcribe both the minus and positive strands of genomic RNA. The kinase-like NiRAN domain of NSP12 attaches one or more nucleotides to the amino terminus of NSP9, forming a covalent RNA-protein intermediate that serves as transcription/replication primer. Subgenomic RNAs (sgRNAs) are formed by discontinuous transcription: The polymerase has the ability to pause at transcription-regulating sequences (TRS) and jump to the leader TRS, resulting in a major deletion. This creates a series of subgenomic RNAs that are replicated, transcribed and translated. In addition, Nsp12 is a subunit of the viral RNA capping enzyme that catalyzes the RNA guanylyltransferase reaction for genomic and sub-genomic RNAs. Subsequently, the NiRAN domain transfers RNA to GDP, and forms the core cap structure GpppA-RNA. Functionally, plays a role in viral RNA synthesis. Multi-functional protein with a zinc-binding domain in N-terminus displaying RNA and DNA duplex-unwinding activities with 5' to 3' polarity. ATPase activity is strongly stimulated by poly(U), poly(dT), poly(C), poly(dA), but not by poly(G). Plays a role in viral RNA synthesis through two distinct activities. The N7-guanine methyltransferase activity plays a role in the formation of the cap structure GpppA-RNA. The proofreading exoribonuclease reduces the sensitivity of the virus to RNA mutagens during replication. This activity acts on both ssRNA and dsRNA in a 3'-5' direction. In terms of biological role, plays a role in viral transcription/replication and prevents the simultaneous activation of host cell dsRNA sensors, such as MDA5/IFIH1, OAS, and PKR. Acts by degrading the 5'-polyuridines generated during replication of the poly(A) region of viral genomic and subgenomic RNAs. Catalyzes a two-step reaction in which a 2'3'-cyclic phosphate (2'3'-cP) is first generated by 2'-O transesterification, which is then hydrolyzed to a 3'-phosphate (3'-P). If not degraded, poly(U) RNA would hybridize with poly(A) RNA tails and activate host dsRNA sensors. Decreases the RNA levels and thus the expression of host TBK1 and IRF3, antagonizing the host innate response. The sequence is that of Replicase polyprotein 1ab (rep) from Sus scrofa (Pig).